We begin with the raw amino-acid sequence, 354 residues long: DNA integrity scanning protein DisA (354 aa).

The region spanning 6–144 (DDELKKILKI…GDIKYVLRDS (139 aa)) is the DAC domain. Residues G73, L91, and 104–108 (TRHRT) each bind ATP.

It belongs to the DisA family. In terms of assembly, homooctamer. Mg(2+) is required as a cofactor.

It catalyses the reaction 2 ATP = 3',3'-c-di-AMP + 2 diphosphate. Its function is as follows. Participates in a DNA-damage check-point that is active prior to asymmetric division when DNA is damaged. DisA forms globular foci that rapidly scan along the chromosomes during sporulation, searching for lesions. When a lesion is present, DisA pauses at the lesion site. This triggers a cellular response that culminates in a temporary block in sporulation initiation. Also has diadenylate cyclase activity, catalyzing the condensation of 2 ATP molecules into cyclic di-AMP (c-di-AMP). c-di-AMP acts as a signaling molecule that couples DNA integrity with progression of sporulation. The rise in c-di-AMP level generated by DisA while scanning the chromosome, operates as a positive signal that advances sporulation; upon encountering a lesion, the DisA focus arrests at the damaged site and halts c-di-AMP synthesis. The chain is DNA integrity scanning protein DisA from Clostridium perfringens (strain SM101 / Type A).